A 720-amino-acid polypeptide reads, in one-letter code: Putative glutamine--fructose-6-phosphate aminotransferase [isomerizing] (720 aa).

Residue cysteine 2 is the Nucleophile; for GATase activity of the active site. A Glutamine amidotransferase type-2 domain is found at 2-321 (CGIFGYCNFL…DNDIAHIYDG (320 aa)). A compositionally biased stretch (polar residues) spans 266–280 (STTSTFNHGSSTETP). The interval 266–285 (STTSTFNHGSSTETPAENGL) is disordered. SIS domains are found at residues 393–532 (WLTE…DLVS) and 565–710 (CDKK…VDLP).

The enzyme catalyses D-fructose 6-phosphate + L-glutamine = D-glucosamine 6-phosphate + L-glutamate. It participates in nucleotide-sugar biosynthesis; UDP-N-acetyl-alpha-D-glucosamine biosynthesis; alpha-D-glucosamine 6-phosphate from D-fructose 6-phosphate: step 1/1. Its function is as follows. Involved in amino sugar synthesis (formation of chitin, supplies the amino sugars of asparagine-linked oligosaccharides of glycoproteins). The protein is Putative glutamine--fructose-6-phosphate aminotransferase [isomerizing] of Saccharomyces cerevisiae (strain RM11-1a) (Baker's yeast).